The primary structure comprises 230 residues: Small ribosomal subunit protein uS3 (230 aa).

Positions 39–107 (VREYLFKRLK…PVHINIEEVR (69 aa)) constitute a KH type-2 domain.

The protein belongs to the universal ribosomal protein uS3 family. In terms of assembly, part of the 30S ribosomal subunit. Forms a tight complex with proteins S10 and S14.

Functionally, binds the lower part of the 30S subunit head. Binds mRNA in the 70S ribosome, positioning it for translation. This is Small ribosomal subunit protein uS3 from Alcanivorax borkumensis (strain ATCC 700651 / DSM 11573 / NCIMB 13689 / SK2).